Reading from the N-terminus, the 408-residue chain is Bone morphogenetic protein 4 (408 aa).

An N-terminal signal peptide occupies residues 1–19; that stretch reads MIPGNRMLMVVLLCQVLLG. The propeptide occupies 20 to 292; sequence GASHASLIPE…HTLTRRRAKR (273 aa). At serine 91 the chain carries Phosphoserine. Residues 91-111 form a disordered region; sequence SGEEEEEEQSQGTGLEYPERP. Residues asparagine 144 and asparagine 209 are each glycosylated (N-linked (GlcNAc...) asparagine). The tract at residues 281 to 307 is disordered; sequence RGHTLTRRRAKRSPKHHPQRSRKKNKN. Residues 284–307 show a composition bias toward basic residues; it reads TLTRRRAKRSPKHHPQRSRKKNKN. 3 cysteine pairs are disulfide-bonded: cysteine 308–cysteine 373, cysteine 337–cysteine 405, and cysteine 341–cysteine 407. Residues asparagine 350 and asparagine 365 are each glycosylated (N-linked (GlcNAc...) asparagine).

Belongs to the TGF-beta family. In terms of assembly, homodimer; disulfide-linked. Interacts with SOSTDC1, GREM2, RGMA, RGMB and RGMC. Part of a complex consisting of TWSG1 and CHRD. Interacts with the serine proteases, HTRA1 and HTRA3; the interaction with either inhibits BMP4-mediated signaling. The HTRA protease activity is required for this inhibition. Interacts with FBN1 (via N-terminal domain) and FBN2. Interacts with type I receptor BMPR1A. Interacts with type II receptor BMPR2. Interacts with FSTL1; this interaction inhibits the activation of the BMP4/Smad1/5/8 signaling pathway. Interacts with SCUBE3. Interacts with TGFBR3. As to expression, in the cochlea, detected in nonprosensory regions and outer sulcus (at protein level). Prior to gastrulation, expressed in the extraembryonic ectoderm. Later, expressed in the extraembryonic mesoderm.

The protein resides in the secreted. It is found in the extracellular space. The protein localises to the extracellular matrix. In terms of biological role, growth factor of the TGF-beta superfamily that plays essential roles in many developmental processes, including neurogenesis, vascular development, angiogenesis and osteogenesis. Acts in concert with PTHLH/PTHRP to stimulate ductal outgrowth during embryonic mammary development and to inhibit hair follicle induction. Initiates the canonical BMP signaling cascade by associating with type I receptor BMPR1A and type II receptor BMPR2. Once all three components are bound together in a complex at the cell surface, BMPR2 phosphorylates and activates BMPR1A. In turn, BMPR1A propagates signal by phosphorylating SMAD1/5/8 that travel to the nucleus and act as activators and repressors of transcription of target genes. Positively regulates the expression of odontogenic development regulator MSX1 via inducing the IPO7-mediated import of SMAD1 to the nucleus. Required for MSX1-mediated mesenchymal molar tooth bud development beyond the bud stage, via promoting Wnt signaling. Acts as a positive regulator of odontoblast differentiation during mesenchymal tooth germ formation, expression is repressed during the bell stage by MSX1-mediated inhibition of CTNNB1 signaling. Able to induce its own expression in dental mesenchymal cells and also in the neighboring dental epithelial cells via an MSX1-mediated pathway. Can also signal through non-canonical BMP pathways such as ERK/MAP kinase, PI3K/Akt or SRC cascades. For example, induces SRC phosphorylation which, in turn, activates VEGFR2, leading to an angiogenic response. The polypeptide is Bone morphogenetic protein 4 (Mus musculus (Mouse)).